A 280-amino-acid chain; its full sequence is Ribosomal RNA small subunit methyltransferase A (280 aa).

6 residues coordinate S-adenosyl-L-methionine: N30, V32, G57, E78, D108, and N125.

Belongs to the class I-like SAM-binding methyltransferase superfamily. rRNA adenine N(6)-methyltransferase family. RsmA subfamily.

It localises to the cytoplasm. The enzyme catalyses adenosine(1518)/adenosine(1519) in 16S rRNA + 4 S-adenosyl-L-methionine = N(6)-dimethyladenosine(1518)/N(6)-dimethyladenosine(1519) in 16S rRNA + 4 S-adenosyl-L-homocysteine + 4 H(+). Specifically dimethylates two adjacent adenosines (A1518 and A1519) in the loop of a conserved hairpin near the 3'-end of 16S rRNA in the 30S particle. May play a critical role in biogenesis of 30S subunits. The protein is Ribosomal RNA small subunit methyltransferase A of Leifsonia xyli subsp. xyli (strain CTCB07).